The following is a 362-amino-acid chain: Alpha-2-HS-glycoprotein (362 aa).

A signal peptide spans 1–15 (LILFFCLAQLWGCRA). A Cystatin fetuin-A-type 1 domain is found at 24–130 (YREPACDDVE…QFSVLFAKCD (107 aa)). 6 cysteine pairs are disulfide-bonded: C29-C353, C86-C97, C111-C129, C143-C146, C205-C216, and C227-C244. The N-linked (GlcNAc...) asparagine glycan is linked to N96. A phosphoserine mark is found at S131, S132, and S135. One can recognise a Cystatin fetuin-A-type 2 domain in the interval 141–252 (KVCPNCPLLA…TCTVFQTQPV (112 aa)). 2 N-linked (GlcNAc...) asparagine glycosylation sites follow: N153 and N173. 4 positions are modified to phosphoserine: S314, S318, S321, and S323. An O-linked (GalNAc...) threonine glycan is attached at T332.

It belongs to the fetuin family. Post-translationally, phosphorylated by FAM20C in the extracellular medium. Expressed by the liver and secreted in plasma.

The protein resides in the secreted. The protein is Alpha-2-HS-glycoprotein (AHSG) of Sus scrofa (Pig).